Reading from the N-terminus, the 140-residue chain is Methylglyoxal synthase (140 aa).

The MGS-like domain maps to 1-140 (MNIALIAHDE…KERQEKEGTP (140 aa)). Substrate contacts are provided by residues H8, K12, 34 to 37 (TGTT), and 54 to 55 (SG). D60 (proton donor/acceptor) is an active-site residue. H87 lines the substrate pocket.

Belongs to the methylglyoxal synthase family.

The catalysed reaction is dihydroxyacetone phosphate = methylglyoxal + phosphate. Its function is as follows. Catalyzes the formation of methylglyoxal from dihydroxyacetone phosphate. The polypeptide is Methylglyoxal synthase (Oceanobacillus iheyensis (strain DSM 14371 / CIP 107618 / JCM 11309 / KCTC 3954 / HTE831)).